The sequence spans 397 residues: Putative efflux system protein YvrP (397 aa).

A helical transmembrane segment spans residues 8-28 (LIGGAICAGVLVLAGIGAGGF). Positions 106 to 183 (EDHSDEVEQA…KELAGLTKNK (78 aa)) form a coiled coil.

It belongs to the membrane fusion protein (MFP) (TC 8.A.1) family.

It localises to the cell membrane. The chain is Putative efflux system protein YvrP (yvrP) from Bacillus subtilis (strain 168).